The chain runs to 179 residues: Large ribosomal subunit protein uL5 (179 aa).

This sequence belongs to the universal ribosomal protein uL5 family. Part of the 50S ribosomal subunit; part of the 5S rRNA/L5/L18/L25 subcomplex. Contacts the 5S rRNA and the P site tRNA. Forms a bridge to the 30S subunit in the 70S ribosome.

In terms of biological role, this is one of the proteins that bind and probably mediate the attachment of the 5S RNA into the large ribosomal subunit, where it forms part of the central protuberance. In the 70S ribosome it contacts protein S13 of the 30S subunit (bridge B1b), connecting the 2 subunits; this bridge is implicated in subunit movement. Contacts the P site tRNA; the 5S rRNA and some of its associated proteins might help stabilize positioning of ribosome-bound tRNAs. The chain is Large ribosomal subunit protein uL5 from Lysinibacillus sphaericus (strain C3-41).